The primary structure comprises 167 residues: NADH-quinone oxidoreductase subunit E (167 aa).

Positions 91, 96, 132, and 136 each coordinate [2Fe-2S] cluster.

The protein belongs to the complex I 24 kDa subunit family. [2Fe-2S] cluster serves as cofactor.

The enzyme catalyses a quinone + NADH + 5 H(+)(in) = a quinol + NAD(+) + 4 H(+)(out). Its function is as follows. NDH-1 shuttles electrons from NADH, via FMN and iron-sulfur (Fe-S) centers, to quinones in the respiratory chain. Couples the redox reaction to proton translocation (for every two electrons transferred, four hydrogen ions are translocated across the cytoplasmic membrane), and thus conserves the redox energy in a proton gradient. This is NADH-quinone oxidoreductase subunit E (nuoE) from Rickettsia bellii (strain RML369-C).